A 605-amino-acid chain; its full sequence is Protein spinster (605 aa).

The disordered stretch occupies residues 1 to 94 (MSLKHQKQSY…HPLGEHHHIP (94 aa)). The segment covering 27–38 (SSGSSGSSSSEE) has biased composition (low complexity). Residues 55–67 (TTYSSQQLMPSDT) are compositionally biased toward polar residues. The span at 76–85 (RLRPHHHHHH) shows a compositional bias: basic residues. A helical transmembrane segment spans residues 115-137 (FTVTVLCFVNLINYMDRFTIAGV). Residue Asn-149 is glycosylated (N-linked (GlcNAc...) asparagine). A run of 5 helical transmembrane segments spans residues 153–173 (GLLQ…FGYL), 180–200 (PWIM…GSFM), 203–223 (FGWF…YSTI), 240–260 (MLAL…IVGS), and 271–291 (WALR…LLIK). N-linked (GlcNAc...) asparagine glycosylation is present at Asn-319. 5 consecutive transmembrane segments (helical) span residues 329 to 349 (FTCV…FIYL), 367 to 387 (FNFG…GSFL), 401 to 421 (VICA…CLLV), 431 to 451 (LIFF…DILL), and 465 to 485 (FQIL…VGAI). Asn-519 carries N-linked (GlcNAc...) asparagine glycosylation. The chain crosses the membrane as a helical span at residues 558 to 578 (STSFVEVLGGIFFIFTACFII). N-linked (GlcNAc...) asparagine glycosylation occurs at Asn-583.

Belongs to the major facilitator superfamily. Spinster (TC 2.A.1.49) family. As to expression, enriched in brain (at protein level).

It localises to the late endosome membrane. The protein localises to the lysosome membrane. In terms of biological role, probable sphingolipid transporter that plays a central role in endosomes and/or lysosomes storage. Involved in TGF-beta-mediated synaptic growth regulation both pre- and postsynaptically via its function in endosomal storage regulation. Also required during oogenesis by regulating yolk spheres storage. The sequence is that of Protein spinster (spin) from Drosophila melanogaster (Fruit fly).